The chain runs to 241 residues: Probable cobalt-factor III C(17)-methyltransferase (241 aa).

Belongs to the precorrin methyltransferase family.

The enzyme catalyses Co(II)-factor III + S-adenosyl-L-methionine + H(+) = Co(II)-factor IV + S-adenosyl-L-homocysteine. It participates in cofactor biosynthesis; adenosylcobalamin biosynthesis; cob(II)yrinate a,c-diamide from sirohydrochlorin (anaerobic route): step 3/10. Functionally, methyltransferase that likely catalyzes the ring contraction and methylation of C-17 in cobalt-factor III to form cobalt-factor IV. May also convert cobalt-precorrin-3 to cobalt-precorrin-4. In Salmonella typhimurium (strain LT2 / SGSC1412 / ATCC 700720), this protein is Probable cobalt-factor III C(17)-methyltransferase (cbiH).